Here is a 264-residue protein sequence, read N- to C-terminus: Thymidylate synthase (264 aa).

Residue Arg-21 coordinates dUMP. A (6R)-5,10-methylene-5,6,7,8-tetrahydrofolate-binding site is contributed by His-51. Position 126 to 127 (126 to 127 (RR)) interacts with dUMP. Cys-146 (nucleophile) is an active-site residue. DUMP is bound by residues 166 to 169 (RSAD), Asn-177, and 207 to 209 (HLY). Asp-169 provides a ligand contact to (6R)-5,10-methylene-5,6,7,8-tetrahydrofolate. Residue Ala-263 participates in (6R)-5,10-methylene-5,6,7,8-tetrahydrofolate binding.

The protein belongs to the thymidylate synthase family. Bacterial-type ThyA subfamily. In terms of assembly, homodimer.

It localises to the cytoplasm. The enzyme catalyses dUMP + (6R)-5,10-methylene-5,6,7,8-tetrahydrofolate = 7,8-dihydrofolate + dTMP. It functions in the pathway pyrimidine metabolism; dTTP biosynthesis. Its function is as follows. Catalyzes the reductive methylation of 2'-deoxyuridine-5'-monophosphate (dUMP) to 2'-deoxythymidine-5'-monophosphate (dTMP) while utilizing 5,10-methylenetetrahydrofolate (mTHF) as the methyl donor and reductant in the reaction, yielding dihydrofolate (DHF) as a by-product. This enzymatic reaction provides an intracellular de novo source of dTMP, an essential precursor for DNA biosynthesis. This Legionella pneumophila subsp. pneumophila (strain Philadelphia 1 / ATCC 33152 / DSM 7513) protein is Thymidylate synthase.